Here is a 245-residue protein sequence, read N- to C-terminus: tRNA pseudouridine synthase A (245 aa).

Asp52 (nucleophile) is an active-site residue. Tyr111 contributes to the substrate binding site.

It belongs to the tRNA pseudouridine synthase TruA family. Homodimer.

The catalysed reaction is uridine(38/39/40) in tRNA = pseudouridine(38/39/40) in tRNA. Functionally, formation of pseudouridine at positions 38, 39 and 40 in the anticodon stem and loop of transfer RNAs. This is tRNA pseudouridine synthase A from Wolbachia pipientis subsp. Culex pipiens (strain wPip).